A 162-amino-acid chain; its full sequence is tRNA-specific adenosine deaminase (162 aa).

The region spanning 3–115 (DSDKYFMKCA…KNLQKYICCK (113 aa)) is the CMP/dCMP-type deaminase domain. His54 serves as a coordination point for Zn(2+). Residue Glu56 is the Proton donor of the active site. Zn(2+)-binding residues include Cys84 and Cys87.

It belongs to the cytidine and deoxycytidylate deaminase family. Homodimer. It depends on Zn(2+) as a cofactor.

It catalyses the reaction adenosine(34) in tRNA + H2O + H(+) = inosine(34) in tRNA + NH4(+). In terms of biological role, catalyzes the deamination of adenosine to inosine at the wobble position 34 of tRNA(Arg2). The polypeptide is tRNA-specific adenosine deaminase (Buchnera aphidicola subsp. Baizongia pistaciae (strain Bp)).